Reading from the N-terminus, the 323-residue chain is Queuosine 5'-phosphate N-glycosylase/hydrolase (323 aa).

Residues Asn72, Tyr93, Lys199, Phe229, Asp231, Asp298, Trp302, and Gln306 each coordinate queuosine 5'-phosphate. The Nucleophile or transition state stabilizer role is filled by Asp231.

It belongs to the QNG1 protein family. In terms of assembly, monomer.

The enzyme catalyses queuosine 5'-phosphate + H2O = queuine + D-ribose 5-phosphate. In terms of biological role, catalyzes the hydrolysis of queuosine 5'-phosphate, releasing the nucleobase queuine (q). Is likely required for salvage of queuine from exogenous queuosine (Q) that is imported and then converted to queuosine 5'-phosphate intracellularly. In vitro, can also catalyze the release of the q base directly from Q as substrate; however, Q may not be the biologically relevant substrate. Shows a very low activity on queuosine 3',5'-diphosphate, and cannot release q from queuosine 3'-phosphate and from the 5'-nucleotides AMP, UMP, CMP or GMP, indicating specificity for the queuine base. This Sphaerobacter thermophilus (strain ATCC 49802 / DSM 20745 / KCCM 41009 / NCIMB 13125 / S 6022) protein is Queuosine 5'-phosphate N-glycosylase/hydrolase.